A 529-amino-acid polypeptide reads, in one-letter code: Bifunctional purine biosynthesis protein PurH (529 aa).

The MGS-like domain maps to 1–148 (MQQRRPVRRA…KNHKDVAIVV (148 aa)). Lysine 287 carries the N6-acetyllysine modification.

This sequence belongs to the PurH family.

It carries out the reaction (6R)-10-formyltetrahydrofolate + 5-amino-1-(5-phospho-beta-D-ribosyl)imidazole-4-carboxamide = 5-formamido-1-(5-phospho-D-ribosyl)imidazole-4-carboxamide + (6S)-5,6,7,8-tetrahydrofolate. The catalysed reaction is IMP + H2O = 5-formamido-1-(5-phospho-D-ribosyl)imidazole-4-carboxamide. It participates in purine metabolism; IMP biosynthesis via de novo pathway; 5-formamido-1-(5-phospho-D-ribosyl)imidazole-4-carboxamide from 5-amino-1-(5-phospho-D-ribosyl)imidazole-4-carboxamide (10-formyl THF route): step 1/1. It functions in the pathway purine metabolism; IMP biosynthesis via de novo pathway; IMP from 5-formamido-1-(5-phospho-D-ribosyl)imidazole-4-carboxamide: step 1/1. This Escherichia coli O127:H6 (strain E2348/69 / EPEC) protein is Bifunctional purine biosynthesis protein PurH.